Here is a 430-residue protein sequence, read N- to C-terminus: Cytochrome P450 monooxygenase FGSG_15680 (430 aa).

C351 is a binding site for heme.

This sequence belongs to the cytochrome P450 family. It depends on heme as a cofactor.

It participates in mycotoxin biosynthesis. Functionally, cytochrome P450 monooxygenase; part of the gene cluster that mediates the biosynthesis of gramillins A and B, bicyclic lipopeptides that induce cell death in maize leaves but not in wheat leaves. The nonribosomal peptide synthetase GRA1 incorporates respectively a glutamic adic (Glu), a leucine (Leu), a serine (Ser), a hydroxyglutamine (HOGln), a 2-amino decanoic acid, and 2 cysteins (CysB and CysA). The biosynthesis of 2-amino decanoic acid incorporated in gramillins could be initiated by a fatty acid synthase composed of the alpha and beta subunits FGSG_00036 and FGSG_11656. The cytochrome P450 monooxygenase FGSG_15680 could hydroxylate the fatty acid chain. Subsequent oxidation to the ketone by the oxidoreductase FGSG_00048 and transamination by aminotransferase FGSG_00049 could form 2-amino-decanoic acid. On the other hand, FGSG_15680 could also be responsible for the HO-modified glutamine at the gamma-position. Whether hydroxylation occurs on the fully assembled product or on the Gln residue prior to assembly into the gramillins requires further proof. The thioredoxin FGSG_00043 could also be required for the disulfide-bond formation between CysA and CysB. The specific involvement of the remaining proteins from the cluster is more difficult to discern, but could have broader regulatory (FGSG_00040 and FGSG_11657) or enzymatic functions (FGSG_00044 and FGSG_00045). The final C-domain of GRA1 does not possess the expected sequence of a termination CT domain, often implicated in macrocyclization and release of a cyclopeptidein fungal NRPs; and the thioesterase FGSG_00047 may act in concert with the terminal C-domain of GRA1 to catalyze the formation of the macrocyclic anhydride and release of the products. The chain is Cytochrome P450 monooxygenase FGSG_15680 from Gibberella zeae (strain ATCC MYA-4620 / CBS 123657 / FGSC 9075 / NRRL 31084 / PH-1) (Wheat head blight fungus).